Here is a 162-residue protein sequence, read N- to C-terminus: MRISKPSLRSTSIQCYLCFLLNSHLITEAGIHVFVWGCISAGLPKTEASWHDVIYDLKRIENLIQSIHIDATLYTESDVHPNCKITAMKCFLLELRVILHESRNEDIHETITNLIILANSSLNSNGNVTESGCKECEELEEKSIAEFLQSFVHIVQMFINTS.

The first 29 residues, 1 to 29 (MRISKPSLRSTSIQCYLCFLLNSHLITEA), serve as a signal peptide directing secretion. Residues 30–48 (GIHVFVWGCISAGLPKTEA) constitute a propeptide that is removed on maturation. Cystine bridges form between C83–C133 and C90–C136. Residues N119 and N127 are each glycosylated (N-linked (GlcNAc...) asparagine).

It belongs to the IL-15/IL-21 family.

The protein resides in the secreted. Functionally, cytokine that plays a major role in the development of inflammatory and protective immune responses to microbial invaders and parasites by modulating immune cells of both the innate and adaptive immune systems. Stimulates the proliferation of natural killer cells, T-cells and B-cells and promotes the secretion of several cytokines. In monocytes, induces the production of IL8 and monocyte chemotactic protein 1/CCL2, two chemokines that attract neutrophils and monocytes respectively to sites of infection. Unlike most cytokines, which are secreted in soluble form, IL15 is expressed in association with its high affinity IL15RA on the surface of IL15-producing cells and delivers signals to target cells that express IL2RB and IL2RG receptor subunits. Binding to its receptor triggers the phosphorylation of JAK1 and JAK3 and the recruitment and subsequent phosphorylation of signal transducer and activator of transcription-3/STAT3 and STAT5. In mast cells, induces the rapid tyrosine phosphorylation of STAT6 and thereby controls mast cell survival and release of cytokines such as IL4. This Cavia porcellus (Guinea pig) protein is Interleukin-15 (IL15).